We begin with the raw amino-acid sequence, 445 residues long: Probable D-serine dehydratase (445 aa).

Lysine 111 is modified (N6-(pyridoxal phosphate)lysine).

The protein belongs to the serine/threonine dehydratase family. DsdA subfamily. Requires pyridoxal 5'-phosphate as cofactor.

The catalysed reaction is D-serine = pyruvate + NH4(+). In Burkholderia pseudomallei (strain K96243), this protein is Probable D-serine dehydratase.